We begin with the raw amino-acid sequence, 170 residues long: CCHC-type zinc finger nucleic acid binding protein (170 aa).

Residue S2 is modified to N-acetylserine. The CCHC-type 1 zinc finger occupies 4-21 (NECFKCGRSGHWARECPT). K8 bears the N6-acetyllysine mark. Residues R25 and R27 each carry the omega-N-methylarginine; by PRMT1 modification. Residues 25–33 (RGRGMRSRG) are RNA-binding Arg/Gly-rich region (RGG-box). S42 carries the post-translational modification Phosphoserine. 6 CCHC-type zinc fingers span residues 45-62 (DICY…DCDL), 65-82 (DACY…DCKE), 89-106 (QCCY…DCDH), 110-127 (QKCY…DCTK), 128-145 (VKCY…NCSK), and 149-166 (VNCY…ECTI). R72 is subject to Omega-N-methylarginine.

As to quaternary structure, associates with the 40S ribosomal subunit, the 80S ribosome and with polysomes. Arginine methylation by PRMT1 in the Arg/Gly-rich region impedes RNA binding.

It localises to the nucleus. The protein resides in the cytoplasm. Its subcellular location is the endoplasmic reticulum. Functionally, single-stranded DNA-binding protein that preferentially binds to the sterol regulatory element (SRE) sequence 5'-GTGCGGTG-3', and thereby mediates transcriptional repression. Has a role as transactivator of the Myc promoter. Binds single-stranded RNA in a sequence-specific manner. Binds G-rich elements in target mRNA coding sequences. Prevents G-quadruplex structure formation in vitro, suggesting a role in supporting translation by resolving stable structures on mRNAs. The sequence is that of CCHC-type zinc finger nucleic acid binding protein (CNBP) from Bos taurus (Bovine).